We begin with the raw amino-acid sequence, 209 residues long: Large ribosomal subunit protein uL3 (209 aa).

At glutamine 150 the chain carries N5-methylglutamine.

Belongs to the universal ribosomal protein uL3 family. Part of the 50S ribosomal subunit. Forms a cluster with proteins L14 and L19. In terms of processing, methylated by PrmB.

Functionally, one of the primary rRNA binding proteins, it binds directly near the 3'-end of the 23S rRNA, where it nucleates assembly of the 50S subunit. In Proteus mirabilis (strain HI4320), this protein is Large ribosomal subunit protein uL3.